A 193-amino-acid polypeptide reads, in one-letter code: DNA damage-inducible transcript 4-like protein (193 aa).

The protein belongs to the DDIT4 family. As to expression, up-regulated in atherosclerotic plaques relative to healthy segments of the same artery.

It is found in the cytoplasm. In terms of biological role, inhibits cell growth by regulating the TOR signaling pathway upstream of the TSC1-TSC2 complex and downstream of AKT1. The protein is DNA damage-inducible transcript 4-like protein (DDIT4L) of Homo sapiens (Human).